Consider the following 442-residue polypeptide: Chromosomal replication initiator protein DnaA (442 aa).

The tract at residues 1–68 (MDAWPRCLER…ELLAYFVGNG (68 aa)) is domain I, interacts with DnaA modulators. The segment at 68-104 (GDVALAVGSRPRAPEPAPAPVAVPSAPQAAPIVPFAG) is domain II. Residues 105–322 (NLDSHYTFAN…GALNTLVARA (218 aa)) form a domain III, AAA+ region region. Residues Gly-150, Gly-152, Lys-153, and Thr-154 each coordinate ATP. The domain IV, binds dsDNA stretch occupies residues 323–442 (NFTGRSITVE…WEKLIRKLSE (120 aa)).

The protein belongs to the DnaA family. Oligomerizes as a right-handed, spiral filament on DNA at oriC.

The protein localises to the cytoplasm. Plays an essential role in the initiation and regulation of chromosomal replication. ATP-DnaA binds to the origin of replication (oriC) to initiate formation of the DNA replication initiation complex once per cell cycle. Binds the DnaA box (a 9 base pair repeat at the origin) and separates the double-stranded (ds)DNA. Forms a right-handed helical filament on oriC DNA; dsDNA binds to the exterior of the filament while single-stranded (ss)DNA is stabiized in the filament's interior. The ATP-DnaA-oriC complex binds and stabilizes one strand of the AT-rich DNA unwinding element (DUE), permitting loading of DNA polymerase. After initiation quickly degrades to an ADP-DnaA complex that is not apt for DNA replication. Binds acidic phospholipids. In Xanthomonas axonopodis pv. citri (strain 306), this protein is Chromosomal replication initiator protein DnaA.